A 30-amino-acid chain; its full sequence is Snaclec carinactivase-1 regulatory subunit 14 kDa chain (30 aa).

The 30-residue stretch at 1–30 (DCLPDWFHYEGHCYRVFDEPKKWADAEKFC) folds into the C-type lectin domain. A disulfide bridge connects residues cysteine 2 and cysteine 13.

It belongs to the snaclec family. In terms of assembly, heterodimer of a metalloproteinase subunit and a regulatory subunit comprising two polypeptides disulfide-linked (14 kDa and 17 kDa chains). Expressed by the venom gland.

Its subcellular location is the secreted. Its function is as follows. Calcium-dependent prothrombin activator. This protein may activate prothrombin via recognition by the regulatory subunit of the calcium ion bound conformation of its gamma-carboxyglutamic acid (GLA) domain, and the subsequent conversion of prothrombin to active thrombin is catalyzed by the catalytic subunit. The protein is Snaclec carinactivase-1 regulatory subunit 14 kDa chain of Echis carinatus (Saw-scaled viper).